The primary structure comprises 549 residues: Cytoplasmic trehalase (549 aa).

Substrate contacts are provided by residues arginine 168, tryptophan 175–aspartate 176, asparagine 212, arginine 221–glutamine 223, arginine 292–glutamate 294, and glycine 324. Active-site proton donor/acceptor residues include aspartate 326 and glutamate 509. Glutamate 525 is a substrate binding site.

The protein belongs to the glycosyl hydrolase 37 family. Monomer.

The protein resides in the cytoplasm. It carries out the reaction alpha,alpha-trehalose + H2O = alpha-D-glucose + beta-D-glucose. Its pathway is glycan degradation; trehalose degradation; D-glucose from alpha,alpha-trehalose: step 1/1. Its function is as follows. Hydrolyzes trehalose to glucose. Could be involved, in cells returning to low osmolarity conditions, in the utilization of the accumulated cytoplasmic trehalose, which was synthesized in response to high osmolarity. The protein is Cytoplasmic trehalase of Escherichia fergusonii (strain ATCC 35469 / DSM 13698 / CCUG 18766 / IAM 14443 / JCM 21226 / LMG 7866 / NBRC 102419 / NCTC 12128 / CDC 0568-73).